Consider the following 190-residue polypeptide: MSNVPPPSGLSYQVKKKLEGKRDKDQENEALEWIEALTGLKLDRSKLYEDILKDGTVLCKLMNSIKPGCIKKINENATMPFKIMENISAFLEAMKGYGVPVADLFQTVDLFEKKDIAQVTRTLFALGRTCQTHPEYSGPVLGPKLATENKREFTEQQLREGQNVVSLQYGSNKGASQAGINMGKQRMIMD.

A disordered region spans residues 1-23 (MSNVPPPSGLSYQVKKKLEGKRD). In terms of domain architecture, Calponin-homology (CH) spans 24-130 (KDQENEALEW…RTLFALGRTC (107 aa)). The stretch at 165–189 (VSLQYGSNKGASQAGINMGKQRMIM) is one Calponin-like repeat.

Belongs to the calponin family. In terms of tissue distribution, muscle specific.

In Echinococcus granulosus (Hydatid tapeworm), this protein is Myophilin.